A 214-amino-acid chain; its full sequence is Probable GTP-binding protein EngB (214 aa).

The 173-residue stretch at 22 to 194 folds into the EngB-type G domain; sequence NLPEIAFAGR…WARIDALLSP (173 aa). GTP-binding positions include 30–37, 57–61, 75–78, 142–145, and 173–175; these read GRSNVGKS, GRTQL, DLPG, TKCD, and FSA. Residues Ser37 and Thr59 each coordinate Mg(2+).

The protein belongs to the TRAFAC class TrmE-Era-EngA-EngB-Septin-like GTPase superfamily. EngB GTPase family. Mg(2+) is required as a cofactor.

Necessary for normal cell division and for the maintenance of normal septation. This is Probable GTP-binding protein EngB from Citrifermentans bemidjiense (strain ATCC BAA-1014 / DSM 16622 / JCM 12645 / Bem) (Geobacter bemidjiensis).